The primary structure comprises 256 residues: Ubiquinone/menaquinone biosynthesis C-methyltransferase UbiE (256 aa).

A compositionally biased stretch (basic and acidic residues) spans 1–12 (MNDQRKGDHAEP). The interval 1 to 23 (MNDQRKGDHAEPTTHFGYQDVPE) is disordered. Residues T79, D100, and 128-129 (DA) each bind S-adenosyl-L-methionine.

Belongs to the class I-like SAM-binding methyltransferase superfamily. MenG/UbiE family.

It carries out the reaction a 2-demethylmenaquinol + S-adenosyl-L-methionine = a menaquinol + S-adenosyl-L-homocysteine + H(+). The enzyme catalyses a 2-methoxy-6-(all-trans-polyprenyl)benzene-1,4-diol + S-adenosyl-L-methionine = a 5-methoxy-2-methyl-3-(all-trans-polyprenyl)benzene-1,4-diol + S-adenosyl-L-homocysteine + H(+). It functions in the pathway quinol/quinone metabolism; menaquinone biosynthesis; menaquinol from 1,4-dihydroxy-2-naphthoate: step 2/2. Its pathway is cofactor biosynthesis; ubiquinone biosynthesis. Methyltransferase required for the conversion of demethylmenaquinol (DMKH2) to menaquinol (MKH2) and the conversion of 2-polyprenyl-6-methoxy-1,4-benzoquinol (DDMQH2) to 2-polyprenyl-3-methyl-6-methoxy-1,4-benzoquinol (DMQH2). The polypeptide is Ubiquinone/menaquinone biosynthesis C-methyltransferase UbiE (Pseudomonas putida (strain GB-1)).